Consider the following 150-residue polypeptide: Ribosome maturation factor RimP (150 aa).

This sequence belongs to the RimP family.

The protein localises to the cytoplasm. Required for maturation of 30S ribosomal subunits. This chain is Ribosome maturation factor RimP, found in Klebsiella pneumoniae (strain 342).